The chain runs to 343 residues: Fructose-1,6-bisphosphatase class 1 (343 aa).

The Mg(2+) site is built by Glu-90, Asp-109, Leu-111, and Asp-112. Substrate is bound by residues 112-115 (DGSS) and Asn-199. Glu-271 is a Mg(2+) binding site.

The protein belongs to the FBPase class 1 family. As to quaternary structure, homotetramer. Mg(2+) is required as a cofactor.

The protein resides in the cytoplasm. It catalyses the reaction beta-D-fructose 1,6-bisphosphate + H2O = beta-D-fructose 6-phosphate + phosphate. The protein operates within carbohydrate biosynthesis; Calvin cycle. In Rhodopseudomonas palustris (strain HaA2), this protein is Fructose-1,6-bisphosphatase class 1.